A 163-amino-acid chain; its full sequence is MPSFDIVSEIDMQEVRNAVENATRELSTRWDFRNVPASFELNEKSQSIKATSESDFQVQQLIDIMREKLLKRGIEGGALEVPEEFEHSGKTYSVEAKLKQGIETTQAKKIVKLIKDSKLKVQAQIQGEQVRVTGKSRDDLQGVMALIRGGNLGQPFQFTNFRD.

Belongs to the YajQ family.

Nucleotide-binding protein. The sequence is that of Nucleotide-binding protein PC1_1036 from Pectobacterium carotovorum subsp. carotovorum (strain PC1).